Reading from the N-terminus, the 454-residue chain is Innexin-19 (454 aa).

Over 1–48 (MWRTPASTGPLRQDRQMFFHATLARSFINALSVRGDDDAVDRLNYYYT) the chain is Cytoplasmic. A helical transmembrane segment spans residues 49 to 69 (PLILAVCCLVISAKQYGGTPI). Over 70-118 (ECWVNPHSRESMEEYIESYCWIQNTYWIPMYENVPDDHTAREEKQIGYY) the chain is Extracellular. Residues 119–139 (QWVPFILIAEALMFSLPCIFW) form a helical membrane-spanning segment. Residues 140-214 (RLCSFQSGLN…SRFLSGQCLS (75 aa)) lie on the Cytoplasmic side of the membrane. The chain crosses the membrane as a helical span at residues 215–235 (ILHSFTKLLYSMNVVAQFLIL). The Extracellular segment spans residues 236–300 (NACLKSSDFL…ALLINIINEK (65 aa)). Residues 301–321 (VFAFLWCWYMILAIITTCSFI) form a helical membrane-spanning segment. The Cytoplasmic segment spans residues 322–454 (YWIANSFIHS…SNPGQTKSFL (133 aa)).

It belongs to the pannexin family. Specifically expressed in sensory neurons and interneurons in the head and tail. Expressed in neurons AWC, ASH, AFD, ASI, ADL, ASK, BAG, AWB, and ADF (head sensory neurons); ADA, AIZ, RIC, AIY, and AIM (head interneurons); PHA and PHB (tail sensory neurons); and PVC and PVQ (tail interneurons).

The protein resides in the cell membrane. It localises to the cell junction. Its subcellular location is the gap junction. In terms of biological role, structural component of the gap junctions that specifically coordinates left-right asymmetry in the developing nervous system. Acts by forming gap junction network linking embryonic neurons and providing electrical coupling between cells, leading to promote or inhibit AWC signaling. Required for the left and right AWC olfactory neurons to establish asymmetric patterns of gene expression during embryogenesis. Acts autonomously. The protein is Innexin-19 (inx-19) of Caenorhabditis elegans.